We begin with the raw amino-acid sequence, 172 residues long: MAGSVADSDAVVKLDDGHLNNSLGSPVQADVYFPRLIVPFCGHIKGGMRPGKKVLVMGIVDLNPESFAISLTCGDSEDPPADVAIELKAVFTDRQLLRNSCISGERGEEQSAIPYFPFIPDQPFRVEILCEHPRFRVFVDGHQLFDFYHRIQTLSAIDTIKINGDLQITKLG.

An N-acetylalanine modification is found at Ala2. Ser22 and Ser25 each carry phosphoserine. The Galectin domain maps to 39–168; the sequence is PFCGHIKGGM…TIKINGDLQI (130 aa).

In terms of assembly, monomer.

Does not bind lactose, and may not bind carbohydrates. The sequence is that of Galectin-related protein (Lgalsl) from Mus musculus (Mouse).